Consider the following 242-residue polypeptide: Venom nerve growth factor 2 (242 aa).

An N-terminal signal peptide occupies residues 1–18; sequence MSMLCYTLIIAFLIGIWA. Positions 19–125 are excised as a propeptide; the sequence is APQSEDNVPL…ALNRNIQAKR (107 aa). Residues 47 to 66 are compositionally biased toward basic and acidic residues; sequence DLKTSRNTDQRHPAPKKADD. The segment at 47–70 is disordered; that stretch reads DLKTSRNTDQRHPAPKKADDQELG. Intrachain disulfides connect cysteine 139–cysteine 203, cysteine 181–cysteine 231, and cysteine 191–cysteine 233.

The protein belongs to the NGF-beta family. In terms of assembly, homodimer; non-covalently linked. In terms of tissue distribution, expressed by the venom gland.

Its subcellular location is the secreted. In terms of biological role, nerve growth factor is important for the development and maintenance of the sympathetic and sensory nervous systems. It stimulates division and differentiation of sympathetic and embryonic sensory neurons as well as basal forebrain cholinergic neurons in the brain. Its relevance in the snake venom is not clear. However, it has been shown to inhibit metalloproteinase-dependent proteolysis of platelet glycoprotein Ib alpha, suggesting a metalloproteinase inhibition to prevent metalloprotease autodigestion and/or protection against prey proteases. Binds a lipid between the two protein chains in the homodimer. The lipid-bound form promotes histamine relase from mouse mast cells, contrary to the lipid-free form. The sequence is that of Venom nerve growth factor 2 from Pseudechis australis (Mulga snake).